The sequence spans 429 residues: Adenylosuccinate synthetase (429 aa).

GTP is bound by residues 12 to 18 (GDEGKGK) and 40 to 42 (GHT). Asp-13 acts as the Proton acceptor in catalysis. The Mg(2+) site is built by Asp-13 and Gly-40. IMP is bound by residues 13 to 16 (DEGK), 38 to 41 (NAGH), Thr-129, Arg-143, Gln-223, Thr-238, and Arg-302. Catalysis depends on His-41, which acts as the Proton donor. 298–304 (VVTGRKR) provides a ligand contact to substrate. Residues Arg-304, 330-332 (KLD), and 412-414 (STS) each bind GTP.

This sequence belongs to the adenylosuccinate synthetase family. In terms of assembly, homodimer. It depends on Mg(2+) as a cofactor.

It is found in the cytoplasm. It carries out the reaction IMP + L-aspartate + GTP = N(6)-(1,2-dicarboxyethyl)-AMP + GDP + phosphate + 2 H(+). It functions in the pathway purine metabolism; AMP biosynthesis via de novo pathway; AMP from IMP: step 1/2. Its function is as follows. Plays an important role in the de novo pathway of purine nucleotide biosynthesis. Catalyzes the first committed step in the biosynthesis of AMP from IMP. This is Adenylosuccinate synthetase from Bartonella tribocorum (strain CIP 105476 / IBS 506).